Here is a 257-residue protein sequence, read N- to C-terminus: A-factor type gamma-butyrolactone 1'-reductase (1S-forming) (257 aa).

The Proton acceptor role is filled by tyrosine 161.

The protein belongs to the short-chain dehydrogenases/reductases (SDR) family. As to quaternary structure, homodimer.

It catalyses the reaction a (3R,4R)-3-[(1S)-1-hydroxyalkyl]-4-(hydroxymethyl)oxolan-2-one + NADP(+) = a (3R,4R)-3-alkanoyl-4-(hydroxymethyl)oxolan-2-one + NADPH + H(+). Involved in the biosynthesis of virginiae butanolide (VB), which regulates the production of antibiotic virginiamycin. Catalyzes the reduction of 6-dehydro-VB-A to VB-A, the last catalytic step in VB biosynthesis. In vitro, can use various synthetic A-factor-type analogs. The chain is A-factor type gamma-butyrolactone 1'-reductase (1S-forming) from Streptomyces virginiae (Streptomyces cinnamonensis).